The following is a 165-amino-acid chain: Type 3 secretion system regulator YopR (165 aa).

The tract at residues 2–11 is 5' secretion signal; the sequence is TVTLNRGSIT. Residues 131 to 149 are 3' secretion signal; the sequence is PYLSELINKELMILLPYNS.

This sequence belongs to the YopR family.

The protein localises to the secreted. May be involved in the regulation of the assembly of the type III secretion system (T3SS), also called injectisome, which is used to inject bacterial effector proteins into eukaryotic host cells. May control the secretion and/or polymerization of YscF/SctF, the principal component of the needle filament, thereby impacting the assembly of the T3SS. Involved in pathogenesis. Essential for the establishment of Yersinia infections in a mouse model system. The polypeptide is Type 3 secretion system regulator YopR (Yersinia enterocolitica).